Reading from the N-terminus, the 227-residue chain is Phosphoribosylformylglycinamidine synthase subunit PurQ (227 aa).

A Glutamine amidotransferase type-1 domain is found at 3–225 (FAVIVLPGSN…VKNWRETHVA (223 aa)). Cysteine 86 functions as the Nucleophile in the catalytic mechanism. Active-site residues include histidine 194 and glutamate 196.

In terms of assembly, part of the FGAM synthase complex composed of 1 PurL, 1 PurQ and 2 PurS subunits.

The protein resides in the cytoplasm. The catalysed reaction is N(2)-formyl-N(1)-(5-phospho-beta-D-ribosyl)glycinamide + L-glutamine + ATP + H2O = 2-formamido-N(1)-(5-O-phospho-beta-D-ribosyl)acetamidine + L-glutamate + ADP + phosphate + H(+). It catalyses the reaction L-glutamine + H2O = L-glutamate + NH4(+). It functions in the pathway purine metabolism; IMP biosynthesis via de novo pathway; 5-amino-1-(5-phospho-D-ribosyl)imidazole from N(2)-formyl-N(1)-(5-phospho-D-ribosyl)glycinamide: step 1/2. Its function is as follows. Part of the phosphoribosylformylglycinamidine synthase complex involved in the purines biosynthetic pathway. Catalyzes the ATP-dependent conversion of formylglycinamide ribonucleotide (FGAR) and glutamine to yield formylglycinamidine ribonucleotide (FGAM) and glutamate. The FGAM synthase complex is composed of three subunits. PurQ produces an ammonia molecule by converting glutamine to glutamate. PurL transfers the ammonia molecule to FGAR to form FGAM in an ATP-dependent manner. PurS interacts with PurQ and PurL and is thought to assist in the transfer of the ammonia molecule from PurQ to PurL. The chain is Phosphoribosylformylglycinamidine synthase subunit PurQ from Bacillus licheniformis (strain ATCC 14580 / DSM 13 / JCM 2505 / CCUG 7422 / NBRC 12200 / NCIMB 9375 / NCTC 10341 / NRRL NRS-1264 / Gibson 46).